Reading from the N-terminus, the 174-residue chain is Keratin-associated protein 9-2 (174 aa).

17 repeat units span residues 8–12, 13–17, 18–22, 37–41, 42–46, 51–55, 61–65, 66–70, 75–79, 80–84, 85–89, 90–94, 95–99, 144–148, 149–153, 154–158, and 168–172. Residues 8 to 172 form a 17 X 5 AA repeats of C-C-[RQVSGE]-[SPTQ]-[TASP] region; the sequence is CCQPTCCRTT…TCVSSCCQPS (165 aa).

Belongs to the KRTAP type 9 family. As to quaternary structure, interacts with hair keratins.

Its function is as follows. In the hair cortex, hair keratin intermediate filaments are embedded in an interfilamentous matrix, consisting of hair keratin-associated proteins (KRTAP), which are essential for the formation of a rigid and resistant hair shaft through their extensive disulfide bond cross-linking with abundant cysteine residues of hair keratins. The matrix proteins include the high-sulfur and high-glycine-tyrosine keratins. This is Keratin-associated protein 9-2 (KRTAP9-2) from Homo sapiens (Human).